Consider the following 382-residue polypeptide: Lipid-A-disaccharide synthase (382 aa).

Belongs to the LpxB family.

It carries out the reaction 2-N,3-O-bis[(3R)-3-hydroxytetradecanoyl]-alpha-D-glucosaminyl 1-phosphate + UDP-2-N,3-O-bis[(3R)-3-hydroxytetradecanoyl]-alpha-D-glucosamine = lipid A disaccharide (E. coli) + UDP + H(+). It catalyses the reaction a lipid X + a UDP-2-N,3-O-bis[(3R)-3-hydroxyacyl]-alpha-D-glucosamine = a lipid A disaccharide + UDP + H(+). It functions in the pathway glycolipid biosynthesis; lipid IV(A) biosynthesis; lipid IV(A) from (3R)-3-hydroxytetradecanoyl-[acyl-carrier-protein] and UDP-N-acetyl-alpha-D-glucosamine: step 5/6. Condensation of UDP-2,3-diacylglucosamine and 2,3-diacylglucosamine-1-phosphate to form lipid A disaccharide, a precursor of lipid A, a phosphorylated glycolipid that anchors the lipopolysaccharide to the outer membrane of the cell. The polypeptide is Lipid-A-disaccharide synthase (Shigella dysenteriae serotype 1 (strain Sd197)).